The sequence spans 480 residues: Lysostaphin (480 aa).

Residues 1-23 (MKKTKNNYYTTPLAIGLSTFALA) form the signal peptide. A propeptide spanning residues 24–234 (SIVYGGIQNE…ALVQNRTALR (211 aa)) is cleaved from the precursor. 13 repeat units span residues 49 to 61 (AEVE…VENT), 62 to 74 (AEVE…VENT), 75 to 87 (AEVE…VENT), 88 to 100 (AEVE…VENT), 101 to 113 (AEVE…VENT), 114 to 126 (AEVE…VENT), 127 to 139 (AEVE…VENT), 140 to 152 (AEVE…VENT), 153 to 165 (AEVE…VENT), 166 to 178 (AEVE…VENT), 179 to 191 (AEVE…VENT), 192 to 204 (AEVE…VENT), and 205 to 217 (AEVE…VENT). A 14 X 13 AA tandem repeats of A-E-V-E-T-S-K-[AP]-P-V-E-N-T region spans residues 49–230 (AEVETSKPPV…ETSKALVQNR (182 aa)). Residues 51–219 (VETSKPPVEN…SKAPVENTAE (169 aa)) form a disordered region. Residues 218–230 (AEVETSKALVQNR) form a 14; approximate repeat. Positions 266 and 270 each coordinate Zn(2+). Residue His347 is part of the active site. Residue His349 participates in Zn(2+) binding. The region spanning 400 to 468 (SESASFTPNT…YLPVRTWNKS (69 aa)) is the SH3b domain.

Belongs to the peptidase M23B family. Monomer. Zn(2+) serves as cofactor.

It localises to the secreted. The enzyme catalyses Hydrolysis of the -Gly-|-Gly- bond in the pentaglycine inter-peptide link joining staphylococcal cell wall peptidoglycans.. Lyses staphylococcal cells by hydrolyzing the polyglycine interpeptide bridges of the peptidoglycan. This chain is Lysostaphin (lss), found in Staphylococcus staphylolyticus.